Consider the following 116-residue polypeptide: Ribonuclease P protein component 2 (116 aa).

Belongs to the eukaryotic/archaeal RNase P protein component 2 family. In terms of assembly, consists of a catalytic RNA component and at least 4-5 protein subunits.

It is found in the cytoplasm. The catalysed reaction is Endonucleolytic cleavage of RNA, removing 5'-extranucleotides from tRNA precursor.. Part of ribonuclease P, a protein complex that generates mature tRNA molecules by cleaving their 5'-ends. In Methanosarcina mazei (strain ATCC BAA-159 / DSM 3647 / Goe1 / Go1 / JCM 11833 / OCM 88) (Methanosarcina frisia), this protein is Ribonuclease P protein component 2.